A 103-amino-acid polypeptide reads, in one-letter code: Co-chaperonin GroES (103 aa).

It belongs to the GroES chaperonin family. In terms of assembly, heptamer of 7 subunits arranged in a ring. Interacts with the chaperonin GroEL.

It is found in the cytoplasm. In terms of biological role, together with the chaperonin GroEL, plays an essential role in assisting protein folding. The GroEL-GroES system forms a nano-cage that allows encapsulation of the non-native substrate proteins and provides a physical environment optimized to promote and accelerate protein folding. GroES binds to the apical surface of the GroEL ring, thereby capping the opening of the GroEL channel. This Prochlorococcus marinus subsp. pastoris (strain CCMP1986 / NIES-2087 / MED4) protein is Co-chaperonin GroES.